The sequence spans 256 residues: Pimeloyl-[acyl-carrier protein] methyl ester esterase (256 aa).

An AB hydrolase-1 domain is found at 15 to 242 (HLVLLHGWGL…AAHAPFISHP (228 aa)). Residues Trp22, 82–83 (SL), and 143–147 (FLALQ) contribute to the substrate site. Ser82 serves as the catalytic Nucleophile. Residues Asp207 and His235 contribute to the active site. Substrate is bound at residue His235.

It belongs to the AB hydrolase superfamily. Carboxylesterase BioH family. Monomer.

The protein resides in the cytoplasm. It carries out the reaction 6-carboxyhexanoyl-[ACP] methyl ester + H2O = 6-carboxyhexanoyl-[ACP] + methanol + H(+). It participates in cofactor biosynthesis; biotin biosynthesis. The physiological role of BioH is to remove the methyl group introduced by BioC when the pimeloyl moiety is complete. It allows to synthesize pimeloyl-ACP via the fatty acid synthetic pathway through the hydrolysis of the ester bonds of pimeloyl-ACP esters. In Escherichia coli O157:H7, this protein is Pimeloyl-[acyl-carrier protein] methyl ester esterase.